The primary structure comprises 481 residues: Mechanosensory protein 2 (481 aa).

Residues 1 to 22 are compositionally biased toward low complexity; that stretch reads MSATMSSARNSVVSLSSNGSVK. Disordered regions lie at residues 1 to 67 and 80 to 104; these read MSAT…MATR and SANS…GNGK. Positions 27–38 are enriched in polar residues; it reads LVSNERSSSIQQ. Residues 86–104 are compositionally biased toward basic and acidic residues; the sequence is DSVKKEKQAEKDVEKGNGK. The helical transmembrane segment at 115–135 threads the bilayer; the sequence is GVCGWILTILSYLLIFFTLPI. The span at 403–421 shows a compositional bias: gly residues; that stretch reads EGGGGHGHSHGGGGGGLGS. A disordered region spans residues 403-481; it reads EGGGGHGHSH…SQLDPALLIR (79 aa). Over residues 433-447 the composition is skewed to low complexity; that stretch reads SGPSTTTTSGRPLLR. Residues 463–473 show a composition bias toward polar residues; the sequence is APNQSQTSVSQ.

The protein belongs to the band 7/mec-2 family. Component of a non-voltage-gated amiloride-sensitive cation channel complex (also called the degenerin channel complex) composed of at least the mec-2, mec-4, mec-6 and mec-10 subunits; the complex mediates mechanotransduction in touch cells. Interacts with mec-6 and mec-4.

Its subcellular location is the membrane. Subunit of an amiloride-sensitive cation channel (degenerin channel complex) permeable for sodium, potassium, lithium and N-methylglucamine, and required for mechanosensory transduction (touch sensitivity). Positively regulates the activity of the putative mechanosensory transduction channel. May link the mechanosensory channel and the microtubule cytoskeleton of the touch receptor neurons. Required for the function of a set of six touch receptor neurons. This chain is Mechanosensory protein 2, found in Caenorhabditis elegans.